A 1528-amino-acid chain; its full sequence is 5'-3' exoribonuclease 1 (1528 aa).

3 disordered regions span residues Ser-1246–Glu-1331, Pro-1431–Asp-1455, and Leu-1470–Thr-1528. A compositionally biased stretch (basic and acidic residues) spans Gln-1274 to Asp-1304. The span at Ala-1317–Ala-1326 shows a compositional bias: basic residues. The segment covering Ser-1500–Ala-1517 has biased composition (polar residues). At Thr-1506 the chain carries Phosphothreonine. Ser-1510 carries the phosphoserine modification. Residues Ala-1518 to Thr-1528 show a composition bias toward basic and acidic residues.

This sequence belongs to the 5'-3' exonuclease family. Mg(2+) serves as cofactor.

It is found in the cytoplasm. The protein resides in the perinuclear region. It localises to the P-body. Its activity is regulated as follows. 3'-phosphoadenosine 5'-phosphate (pAp) is an inhibitor of KEM1. Sodium-induced GCN4 expression reduces pAp accumulation by activating HAL2 expression, and therefore maintains mRNA degradation capacity which is likely to be important for the accurate and rapid adaptation of gene expression to salt stress. Multifunctional protein that exhibits several independent functions at different levels of the cellular processes. 5'-3' exonuclease component of the nonsense-mediated mRNA decay (NMD) which is a highly conserved mRNA degradation pathway, an RNA surveillance system whose role is to identify and rid cells of mRNA with premature termination codons and thus prevents accumulation of potentially harmful truncated proteins. The NMD pathway has a second role regulating the decay of wild-type mRNAs, and especially mRNAs that are important for telomere functions. Participate in CTH2-mediated and VTS1-mediated mRNA turnover. Involved in the degradation of several hypomodified mature tRNA species and participates in the 5'-processing or the degradation of the snoRNA precursors and rRNA processing. Involved in defense against virus and suppresses viral RNA recombination by rapidly removing the 5'-truncated RNAs, the substrates of recombination, and thus reducing the chance for recombination to occur in the parental strain. Required for the assembly of the virus-like particles of the Ty3 retrotransposon and contributes to the efficient generation of narnavirus 20S RNA by playing a major role in the elimination of the non-viral upstream sequences from the primary transcripts. Degrades single-stranded DNA (ss-DNA) and can renature complementary ss-DNA as well as catalyzes the formation of heteroduplex DNA from circular ss-DNA and homologous linear ds-DNA in vitro. Acts as a microtubule-associated protein which interacts with cytoplasmic microtubules through beta-tubulin and promotes in vitro assembly of tubulin into microtubules. Associates with microtubule functions such as chromosome transmission, nuclear migration, and SPB duplication. Has also a role in G1 to S transition and is involved in nuclear fusion during karyogamy. Required for the expression of ROK1 at the post-transcriptional level and for the alpha-factor induction of the karyogamy genes KAR3 and KAR4. Plays a role in filamentous growth. This Saccharomyces cerevisiae (strain ATCC 204508 / S288c) (Baker's yeast) protein is 5'-3' exoribonuclease 1 (XRN1).